Consider the following 179-residue polypeptide: Large ribosomal subunit protein uL5 (179 aa).

This sequence belongs to the universal ribosomal protein uL5 family. Part of the 50S ribosomal subunit; part of the 5S rRNA/L5/L18/L25 subcomplex. Contacts the 5S rRNA and the P site tRNA. Forms a bridge to the 30S subunit in the 70S ribosome.

This is one of the proteins that bind and probably mediate the attachment of the 5S RNA into the large ribosomal subunit, where it forms part of the central protuberance. In the 70S ribosome it contacts protein S13 of the 30S subunit (bridge B1b), connecting the 2 subunits; this bridge is implicated in subunit movement. Contacts the P site tRNA; the 5S rRNA and some of its associated proteins might help stabilize positioning of ribosome-bound tRNAs. This Saccharophagus degradans (strain 2-40 / ATCC 43961 / DSM 17024) protein is Large ribosomal subunit protein uL5.